A 318-amino-acid polypeptide reads, in one-letter code: NADH-ubiquinone oxidoreductase chain 1 (318 aa).

Helical transmembrane passes span 3 to 23 (TMNL…LTLV), 69 to 89 (ILYI…WTPL), 98 to 118 (FNLG…SILW), 135 to 155 (AVAQ…SILL), 171 to 191 (HLWL…STLA), 217 to 237 (AGPF…MNAL), 253 to 273 (ELFT…FLWI), and 294 to 314 (LPLT…ISSI).

The protein belongs to the complex I subunit 1 family. As to quaternary structure, core subunit of respiratory chain NADH dehydrogenase (Complex I) which is composed of 45 different subunits.

It is found in the mitochondrion inner membrane. The catalysed reaction is a ubiquinone + NADH + 5 H(+)(in) = a ubiquinol + NAD(+) + 4 H(+)(out). Core subunit of the mitochondrial membrane respiratory chain NADH dehydrogenase (Complex I) which catalyzes electron transfer from NADH through the respiratory chain, using ubiquinone as an electron acceptor. Essential for the catalytic activity and assembly of complex I. The protein is NADH-ubiquinone oxidoreductase chain 1 (MT-ND1) of Papio hamadryas (Hamadryas baboon).